A 99-amino-acid chain; its full sequence is MPAISRDEVAHLARLSRLALSDAELDEFAGQLDSILNHVKVVTEVAADDVPPMANPNAVTNVTRPDVIVPGLTPEQALSGAPAVEQDRFAVPQILGEGE.

It belongs to the GatC family. Heterotrimer of A, B and C subunits.

The enzyme catalyses L-glutamyl-tRNA(Gln) + L-glutamine + ATP + H2O = L-glutaminyl-tRNA(Gln) + L-glutamate + ADP + phosphate + H(+). It carries out the reaction L-aspartyl-tRNA(Asn) + L-glutamine + ATP + H2O = L-asparaginyl-tRNA(Asn) + L-glutamate + ADP + phosphate + 2 H(+). Functionally, allows the formation of correctly charged Asn-tRNA(Asn) or Gln-tRNA(Gln) through the transamidation of misacylated Asp-tRNA(Asn) or Glu-tRNA(Gln) in organisms which lack either or both of asparaginyl-tRNA or glutaminyl-tRNA synthetases. The reaction takes place in the presence of glutamine and ATP through an activated phospho-Asp-tRNA(Asn) or phospho-Glu-tRNA(Gln). This chain is Aspartyl/glutamyl-tRNA(Asn/Gln) amidotransferase subunit C, found in Rhodococcus erythropolis (strain PR4 / NBRC 100887).